Here is a 75-residue protein sequence, read N- to C-terminus: DNA-directed RNA polymerase subunit omega (75 aa).

This sequence belongs to the RNA polymerase subunit omega family. In cyanobacteria the RNAP catalytic core is composed of 2 alpha, 1 beta, 1 beta', 1 gamma and 1 omega subunit. When a sigma factor is associated with the core the holoenzyme is formed, which can initiate transcription.

It catalyses the reaction RNA(n) + a ribonucleoside 5'-triphosphate = RNA(n+1) + diphosphate. Its function is as follows. Promotes RNA polymerase assembly. Latches the N- and C-terminal regions of the beta' subunit thereby facilitating its interaction with the beta and alpha subunits. The protein is DNA-directed RNA polymerase subunit omega of Prochlorococcus marinus (strain MIT 9211).